The following is a 268-amino-acid chain: Probable chemotaxis protein methyltransferase (268 aa).

One can recognise a CheR-type methyltransferase domain in the interval 1–262; the sequence is MIYSDAGIFL…GITTYRYTTK (262 aa). S-adenosyl-L-methionine is bound by residues Asn60, Thr62, Arg66, Glu104, Asp130, 188 to 189, and 205 to 206; these read NL and RN.

The enzyme catalyses L-glutamyl-[protein] + S-adenosyl-L-methionine = [protein]-L-glutamate 5-O-methyl ester + S-adenosyl-L-homocysteine. Methylation of the membrane-bound methyl-accepting chemotaxis proteins (MCP) to form gamma-glutamyl methyl ester residues in MCP. This is Probable chemotaxis protein methyltransferase (cheRch1) from Rhizobium etli (strain ATCC 51251 / DSM 11541 / JCM 21823 / NBRC 15573 / CFN 42).